A 472-amino-acid chain; its full sequence is 2-methylcitrate synthase, mitochondrial (472 aa).

The N-terminal 29 residues, 1-29 (MALNLTTSRRALGSLKPLTRAAFVGARGY), are a transit peptide targeting the mitochondrion. CoA-binding residues include Arg75 and Lys193. Residue His271 coordinates oxaloacetate. Position 306 (Leu306) interacts with CoA. Residue His307 is part of the active site. CoA contacts are provided by Val348, Gly350, and Tyr351. Positions 353 and 362 each coordinate oxaloacetate. The active site involves His353. Thr402, Lys403, and Asn408 together coordinate CoA. Residue Asp410 is part of the active site. Oxaloacetate is bound by residues Arg436 and Arg456.

Belongs to the citrate synthase family. Homodimer.

Its subcellular location is the mitochondrion matrix. It carries out the reaction propanoyl-CoA + oxaloacetate + H2O = (2S,3S)-2-methylcitrate + CoA + H(+). The catalysed reaction is oxaloacetate + acetyl-CoA + H2O = citrate + CoA + H(+). It functions in the pathway organic acid metabolism; propanoate degradation. Its function is as follows. Component of the methylcitrate cycle that catalyzes the synthesis of (2S,3S)-2-methylcitrate from propionyl-CoA and oxaloacetate. Plays an important role in detoxification of propionyl-CoA, an inhibitor of both primary and secondary metabolism. Also has citrate synthase activity using as substrates acetyl-CoA and oxaloacetate. In Fusarium solani (Filamentous fungus), this protein is 2-methylcitrate synthase, mitochondrial.